The following is a 333-amino-acid chain: Foldase protein PrsA (333 aa).

An N-terminal signal peptide occupies residues Met1–Gly22. A lipid anchor (N-palmitoyl cysteine) is attached at Cys23. The S-diacylglycerol cysteine moiety is linked to residue Cys23. Residues Pro192 to Lys283 enclose the PpiC domain.

This sequence belongs to the PrsA family.

Its subcellular location is the cell membrane. The enzyme catalyses [protein]-peptidylproline (omega=180) = [protein]-peptidylproline (omega=0). Its function is as follows. Plays a major role in protein secretion by helping the post-translocational extracellular folding of several secreted proteins. The sequence is that of Foldase protein PrsA from Clostridium acetobutylicum (strain ATCC 824 / DSM 792 / JCM 1419 / IAM 19013 / LMG 5710 / NBRC 13948 / NRRL B-527 / VKM B-1787 / 2291 / W).